The chain runs to 474 residues: ATP synthase subunit beta (474 aa).

153 to 160 (GGAGVGKT) is a binding site for ATP.

The protein belongs to the ATPase alpha/beta chains family. As to quaternary structure, F-type ATPases have 2 components, CF(1) - the catalytic core - and CF(0) - the membrane proton channel. CF(1) has five subunits: alpha(3), beta(3), gamma(1), delta(1), epsilon(1). CF(0) has three main subunits: a(1), b(2) and c(9-12). The alpha and beta chains form an alternating ring which encloses part of the gamma chain. CF(1) is attached to CF(0) by a central stalk formed by the gamma and epsilon chains, while a peripheral stalk is formed by the delta and b chains.

It localises to the cell inner membrane. It carries out the reaction ATP + H2O + 4 H(+)(in) = ADP + phosphate + 5 H(+)(out). In terms of biological role, produces ATP from ADP in the presence of a proton gradient across the membrane. The catalytic sites are hosted primarily by the beta subunits. The sequence is that of ATP synthase subunit beta from Rickettsia prowazekii (strain Madrid E).